A 237-amino-acid chain; its full sequence is MAIHFISDLHLADDTPALNQLFLDTLAAWRGRIAALYILGDLFEYWVGDDDDSPYLAAPLAAMRDFAAQTPLYVMRGNRDFLLGAGFEARSGARLLDDPTLIEAHGQRILLSHGDALCTDDAAYQQFRAMSRNPQWQQAMLAKPLAERHAIARHARAQSEMNKQQTGLTDISDVTENAVRELLAAHGWPTLIHGHTHRPAHHLHDASSRWVIQDWHGGRGGYLLLDDGGIRSLPLGN.

Positions 8, 10, 41, 78, and 113 each coordinate Mn(2+). Asn78 to Arg79 serves as a coordination point for substrate. Asp121, Ser159, Gln164, and His195 together coordinate substrate. 2 residues coordinate Mn(2+): His195 and His197.

Belongs to the LpxH family. The cofactor is Mn(2+).

The protein localises to the cell inner membrane. It carries out the reaction UDP-2-N,3-O-bis[(3R)-3-hydroxytetradecanoyl]-alpha-D-glucosamine + H2O = 2-N,3-O-bis[(3R)-3-hydroxytetradecanoyl]-alpha-D-glucosaminyl 1-phosphate + UMP + 2 H(+). Its pathway is glycolipid biosynthesis; lipid IV(A) biosynthesis; lipid IV(A) from (3R)-3-hydroxytetradecanoyl-[acyl-carrier-protein] and UDP-N-acetyl-alpha-D-glucosamine: step 4/6. Its function is as follows. Hydrolyzes the pyrophosphate bond of UDP-2,3-diacylglucosamine to yield 2,3-diacylglucosamine 1-phosphate (lipid X) and UMP by catalyzing the attack of water at the alpha-P atom. Involved in the biosynthesis of lipid A, a phosphorylated glycolipid that anchors the lipopolysaccharide to the outer membrane of the cell. The protein is UDP-2,3-diacylglucosamine hydrolase of Chromobacterium violaceum (strain ATCC 12472 / DSM 30191 / JCM 1249 / CCUG 213 / NBRC 12614 / NCIMB 9131 / NCTC 9757 / MK).